Here is a 207-residue protein sequence, read N- to C-terminus: MERKERLRAGIAAMGPDISETAQDRLLAYVDLLKKWNKTYNLTALRDEEKMIVHHLLDSLTLLPYIEGAQTMLDVGSGGGQPGIPAAVCRPDVQITLLDANTKKTAFLRQAAIELGLDNVRVVSGRVEAVSDVRADVVTSRAFAELADFVSWTAHLLKDGGYWAAMKGVYPQGEIGRLPQDVCVEKVQRLDVPGLDAERHIVILSKR.

Residues G76, Q81, 127-128 (VE), and R141 contribute to the S-adenosyl-L-methionine site.

It belongs to the methyltransferase superfamily. RNA methyltransferase RsmG family.

The protein localises to the cytoplasm. The catalysed reaction is guanosine(527) in 16S rRNA + S-adenosyl-L-methionine = N(7)-methylguanosine(527) in 16S rRNA + S-adenosyl-L-homocysteine. Its function is as follows. Specifically methylates the N7 position of guanine in position 527 of 16S rRNA. This is Ribosomal RNA small subunit methyltransferase G from Neisseria gonorrhoeae (strain ATCC 700825 / FA 1090).